The following is a 492-amino-acid chain: Cysteine--tRNA ligase (492 aa).

Cys29 is a Zn(2+) binding site. Positions 31 to 41 (PTVYDYAHIGN) match the 'HIGH' region motif. Residues Cys222, His247, and Glu251 each coordinate Zn(2+). The 'KMSKS' region motif lies at 279–283 (KMSKS). An ATP-binding site is contributed by Lys282.

This sequence belongs to the class-I aminoacyl-tRNA synthetase family. In terms of assembly, monomer. Zn(2+) is required as a cofactor.

The protein localises to the cytoplasm. The enzyme catalyses tRNA(Cys) + L-cysteine + ATP = L-cysteinyl-tRNA(Cys) + AMP + diphosphate. The protein is Cysteine--tRNA ligase of Treponema denticola (strain ATCC 35405 / DSM 14222 / CIP 103919 / JCM 8153 / KCTC 15104).